The primary structure comprises 453 residues: Cytochrome b-c1 complex subunit 2, mitochondrial (453 aa).

The transit peptide at 1 to 14 (MKLLSRAGSFSRFY) directs the protein to the mitochondrion. An N6-acetyllysine mark is found at K66, K199, and K250. S368 bears the Phosphoserine mark.

It belongs to the peptidase M16 family. UQCRC2/QCR2 subfamily. As to quaternary structure, component of the ubiquinol-cytochrome c oxidoreductase (cytochrome b-c1 complex, complex III, CIII), a multisubunit enzyme composed of 11 subunits. The complex is composed of 3 respiratory subunits cytochrome b, cytochrome c1 and Rieske protein UQCRFS1, 2 core protein subunits UQCRC1/QCR1 and UQCRC2/QCR2, and 6 low-molecular weight protein subunits UQCRH/QCR6, UQCRB/QCR7, UQCRQ/QCR8, UQCR10/QCR9, UQCR11/QCR10 and subunit 9, the cleavage product of Rieske protein UQCRFS1. The complex exists as an obligatory dimer and forms supercomplexes (SCs) in the inner mitochondrial membrane with NADH-ubiquinone oxidoreductase (complex I, CI) and cytochrome c oxidase (complex IV, CIV), resulting in different assemblies (supercomplex SCI(1)III(2)IV(1) and megacomplex MCI(2)III(2)IV(2)). Interacts with RAB5IF. Interacts with STMP1. Acetylation of Lys-159 and Lys-250 is observed in liver mitochondria from fasted mice but not from fed mice. Expressed in neurons and astrocytes of the cerebral cortex and hippocampus (at protein level).

It is found in the mitochondrion inner membrane. Functionally, component of the ubiquinol-cytochrome c oxidoreductase, a multisubunit transmembrane complex that is part of the mitochondrial electron transport chain which drives oxidative phosphorylation. The respiratory chain contains 3 multisubunit complexes succinate dehydrogenase (complex II, CII), ubiquinol-cytochrome c oxidoreductase (cytochrome b-c1 complex, complex III, CIII) and cytochrome c oxidase (complex IV, CIV), that cooperate to transfer electrons derived from NADH and succinate to molecular oxygen, creating an electrochemical gradient over the inner membrane that drives transmembrane transport and the ATP synthase. The cytochrome b-c1 complex catalyzes electron transfer from ubiquinol to cytochrome c, linking this redox reaction to translocation of protons across the mitochondrial inner membrane, with protons being carried across the membrane as hydrogens on the quinol. In the process called Q cycle, 2 protons are consumed from the matrix, 4 protons are released into the intermembrane space and 2 electrons are passed to cytochrome c. The 2 core subunits UQCRC1/QCR1 and UQCRC2/QCR2 are homologous to the 2 mitochondrial-processing peptidase (MPP) subunits beta-MPP and alpha-MPP respectively, and they seem to have preserved their MPP processing properties. May be involved in the in situ processing of UQCRFS1 into the mature Rieske protein and its mitochondrial targeting sequence (MTS)/subunit 9 when incorporated into complex III. The sequence is that of Cytochrome b-c1 complex subunit 2, mitochondrial (Uqcrc2) from Mus musculus (Mouse).